We begin with the raw amino-acid sequence, 301 residues long: D-alanine--D-alanine ligase (301 aa).

The ATP-grasp domain maps to 99–294; sequence KCILKAANIR…FSELIDMIID (196 aa). 126 to 181 provides a ligand contact to ATP; sequence IEGMGYPVVVKPTHGGSSVATFIIKEEKDIKNAVTEAFKWDSEVIIEKFIKGDEIT. 3 residues coordinate Mg(2+): aspartate 248, glutamate 261, and asparagine 263.

The protein belongs to the D-alanine--D-alanine ligase family. Mg(2+) is required as a cofactor. Requires Mn(2+) as cofactor.

It is found in the cytoplasm. It catalyses the reaction 2 D-alanine + ATP = D-alanyl-D-alanine + ADP + phosphate + H(+). Its pathway is cell wall biogenesis; peptidoglycan biosynthesis. In terms of biological role, cell wall formation. The sequence is that of D-alanine--D-alanine ligase from Clostridium botulinum (strain Eklund 17B / Type B).